A 159-amino-acid chain; its full sequence is 2-C-methyl-D-erythritol 2,4-cyclodiphosphate synthase (159 aa).

The a divalent metal cation site is built by Asp10 and His12. 4-CDP-2-C-methyl-D-erythritol 2-phosphate contacts are provided by residues 10-12 (DVH) and 36-37 (HS). A divalent metal cation is bound at residue His44. 4-CDP-2-C-methyl-D-erythritol 2-phosphate-binding positions include 58–60 (DIG), 63–67 (FPDTD), 102–108 (AQAPKMA), 134–137 (TTTE), Phe141, and Arg144.

The protein belongs to the IspF family. In terms of assembly, homotrimer. A divalent metal cation is required as a cofactor.

It carries out the reaction 4-CDP-2-C-methyl-D-erythritol 2-phosphate = 2-C-methyl-D-erythritol 2,4-cyclic diphosphate + CMP. The protein operates within isoprenoid biosynthesis; isopentenyl diphosphate biosynthesis via DXP pathway; isopentenyl diphosphate from 1-deoxy-D-xylulose 5-phosphate: step 4/6. Involved in the biosynthesis of isopentenyl diphosphate (IPP) and dimethylallyl diphosphate (DMAPP), two major building blocks of isoprenoid compounds. Catalyzes the conversion of 4-diphosphocytidyl-2-C-methyl-D-erythritol 2-phosphate (CDP-ME2P) to 2-C-methyl-D-erythritol 2,4-cyclodiphosphate (ME-CPP) with a corresponding release of cytidine 5-monophosphate (CMP). This Shewanella piezotolerans (strain WP3 / JCM 13877) protein is 2-C-methyl-D-erythritol 2,4-cyclodiphosphate synthase.